The following is a 105-amino-acid chain: MASTFAIGLGVATAAFLGRAGYVALRRYQGGINAMGKAFYKGGFEPRMTRREAALILELPERTLNKEKVRKKHRQLMLLNHPDRGGSPYLATKINEAKEFLDKHI.

Residues 1 to 3 lie on the Mitochondrial intermembrane side of the membrane; that stretch reads MAS. A helical transmembrane segment spans residues 4 to 23; that stretch reads TFAIGLGVATAAFLGRAGYV. Residues 24 to 105 are Mitochondrial matrix-facing; it reads ALRRYQGGIN…EAKEFLDKHI (82 aa). In terms of domain architecture, J spans 52-105; that stretch reads EAALILELPERTLNKEKVRKKHRQLMLLNHPDRGGSPYLATKINEAKEFLDKHI.

The protein belongs to the TIM14 family. As to quaternary structure, heterodimer with PAM18/pamR. Component of the PAM complex, at least composed of mtHsp70, MGE1/mgeA, tim44, PAM16/pamP, PAM17/pamQ and PAM18/pamR.

The protein resides in the mitochondrion inner membrane. Essential component of the PAM complex, a complex required for the translocation of transit peptide-containing proteins from the inner membrane into the mitochondrial matrix in an ATP-dependent manner. In the complex, it is required to stimulate activity of mtHSP70 (SSC1/sscA). The sequence is that of Mitochondrial import inner membrane translocase subunit tim14 (pam18) from Aspergillus fumigatus (strain ATCC MYA-4609 / CBS 101355 / FGSC A1100 / Af293) (Neosartorya fumigata).